Consider the following 738-residue polypeptide: Flowering time control protein FCA (738 aa).

A disordered region spans residues 1-118 (MHRGGDRSTD…RGDHSDHDNR (118 aa)). Composition is skewed to gly residues over residues 52 to 70 (RGGGGGGGDGGGGGGGGGR) and 81 to 98 (SGGGGYRSGGGGEYGEPG). Residues 109–118 (RGDHSDHDNR) show a composition bias toward basic and acidic residues. RRM domains follow at residues 122–203 (VKLF…YADG) and 213–293 (HKLF…FADP). Disordered stretches follow at residues 292-414 (DPKR…GHHL) and 566-594 (QQSNLNHQQPTQGQPVQSSNPGAPNAIIP). Residues 301–311 (SRGGPAFGGPG) are compositionally biased toward gly residues. Residues 342-358 (HPSSPRSAPHQFNNFGS) are compositionally biased toward polar residues. Positions 368–377 (TVTSTTDTAT) are enriched in low complexity. 2 stretches are compositionally biased toward polar residues: residues 383-401 (FSGNGSLSSQTAVPSSSHM) and 575-594 (PTQGQPVQSSNPGAPNAIIP). The WW domain maps to 609–642 (VPLTCNWTEHTSPEGFKYYYNSITRESKWDKPEE). The disordered stretch occupies residues 670 to 738 (MQQLQSPPQA…QSAQERAWKS (69 aa)). Over residues 683–706 (PAMQPVQQIPQAQQGQQQMQMKQQ) the composition is skewed to low complexity. The span at 723 to 732 (RIQQGIQSAQ) shows a compositional bias: polar residues.

As to quaternary structure, interacts with FY. Binds to SF1, FIK, RPRD1B, Os09g0509000/LOC_Os09g33480 and MADS8. In terms of tissue distribution, mostly expressed in young flowers (panicles) and stems, and also present in young seedlings leaves and roots.

It localises to the nucleus. Functionally, plays a major role in the promotion of the transition of the vegetative meristem to reproductive development. Required for RNA-mediated chromatin silencing of a range of loci in the genome. Cotranscriptionally recognizes aberrant RNA and marks it for silencing. Controls alternative cleavage and polyadenylation on pre-mRNAs and antisense RNAs. Regulates flowering time, seed size and cell volume, probably via the modulation of cell size. The polypeptide is Flowering time control protein FCA (Oryza sativa subsp. japonica (Rice)).